A 133-amino-acid chain; its full sequence is Small ribosomal subunit protein uS8 (133 aa).

It belongs to the universal ribosomal protein uS8 family. As to quaternary structure, part of the 30S ribosomal subunit. Contacts proteins S5 and S12.

One of the primary rRNA binding proteins, it binds directly to 16S rRNA central domain where it helps coordinate assembly of the platform of the 30S subunit. In Leptospira borgpetersenii serovar Hardjo-bovis (strain JB197), this protein is Small ribosomal subunit protein uS8.